The chain runs to 315 residues: Putative carboxypeptidase RC0549 (315 aa).

Serine 125 (nucleophile) is an active-site residue. Catalysis depends on charge relay system residues glutamate 225 and histidine 288.

This sequence belongs to the peptidase S66 family.

This is Putative carboxypeptidase RC0549 from Rickettsia conorii (strain ATCC VR-613 / Malish 7).